A 290-amino-acid polypeptide reads, in one-letter code: uncharacterized protein (290 aa).

The protein resides in the cell membrane. The protein localises to the membrane raft. This is an uncharacterized protein from Bacillus subtilis (strain 168).